The sequence spans 1108 residues: MDTVLNNINQSRYFNDSTANTKIEEIKKHLDSPSDADKLESMKKLIAMLSKGRDVSEAFPQVVKNVIVKNLEIKKLVYMYLVHYAESQNDSALLSINTIQKSLNDQSQVIRASALRVMSSIRVIDIIEVIILAIEKSVKDTSPFVRKAAAFAIAKVHKLDCDKQEPLIDLLEILLNDTSTMVLGAAIVAFNELCPQRFDLLHQHYRKICQLLADFDEWSQVIVLDILTKYARSQFRCPDSTMNDKNIKQFKKKSKSFYSDEEDQEDDEPENSLYKKKPLERDMFDSSEEIDMDHRLLLKSTLPLLQSRNNAVVMAVSSLYFYCAPSIEAQKVGKSLVRILRSGPEVQYITLTNISTMVTLRPSMFEPHLSEFFIHSSDPEYSIKLKLEILTRLATPENIGKILKEFKEYVKNEDKKFVAATIQAIGSCASTVPDVTESCIYGLMSLLSNQSTVVVAESVIVLKRLLQLNATNEKLEKLEKEKEKEKDVKENQSTISKHSSSNNSIKYDNIILHLSKLLDTLQVPSARASIVWVIGEYCYRVPLVAPDVFRKLVKSFSDEHESVKLETLNLGSKLYVQFTDNNSTTTTDNSIPNEFKNERTKEKITLMFQYVLNLAKFDQNYDIRDNSRMLKHFYFNTENTQSINSNIKQIVINQKPIPTETSISEDRQRFTLGSLSHIVNHTALGYTALPDFPDVAPDPSVREPIQRWIPNQQSQQQQHQQQQLNNIFVDTPFYSDEEEEDEEEYDEEEEEEEYEEQNEYEDFFGEEKKNKKKNRKQQNYDEDEYNQDIDDGEYDGEGEVQAEDEDDFDELFGITNDDNNQTANGIGGGGSGEEEMDKFDFENYINSTTKSVKKILLKPTISGGLSIDYCFIRIRDNEEFSCQPRYNIIQLNIKNQSDETFTDISIINKNLIDGADISEFDPIESIEPNQAIQKQIYVLFNSTSQSCKFEISFNKGNFPVTLTPIIGELLIPIVPIYESISQWKDEFEEVGEFKQVDDQFEFGDQCLDKLNNNNNNNNNNNNESGDENIGLMPILPIVLEGINLIPIASNKLKSKIQFASKTLLKDENIYVQIQLLKQQPPTVNCIIRSNDQVVSALLLKKLKDVLQK.

HEAT repeat units lie at residues 90-127 (DSAL…IDII), 327-363 (IEAQ…LRPS), 397-433 (ENIG…STVP), and 434-471 (DVTE…LNAT). A compositionally biased stretch (basic and acidic residues) spans 480–490 (KEKEKEKDVKE). 3 disordered regions span residues 480–501 (KEKE…HSSS), 736–797 (DEEE…YDGE), and 811–835 (LFGI…GEEE). 2 stretches are compositionally biased toward acidic residues: residues 736 to 764 (DEEE…EDFF) and 780 to 797 (YDED…YDGE).

This sequence belongs to the adaptor complexes large subunit family. As to quaternary structure, adaptor protein complex 3 (AP-3) is a heterotetramer composed of two large adaptins (delta-type subunit and beta-type subunit), a medium adaptin (mu-type subunit) and a small adaptin (sigma-type subunit).

It is found in the endosome membrane. Part of the AP-3 complex, an adaptor-related complex which is essential for the compartmentalization of the endocytic pathway. The protein is AP-3 complex subunit beta (ap3b-1) of Dictyostelium discoideum (Social amoeba).